The sequence spans 354 residues: UDP-N-acetylglucosamine--N-acetylmuramyl-(pentapeptide) pyrophosphoryl-undecaprenol N-acetylglucosamine transferase (354 aa).

Residues 11 to 13 (SAG), R164, S194, and Q289 each bind UDP-N-acetyl-alpha-D-glucosamine.

The protein belongs to the glycosyltransferase 28 family. MurG subfamily.

The protein localises to the cell membrane. It carries out the reaction di-trans,octa-cis-undecaprenyl diphospho-N-acetyl-alpha-D-muramoyl-L-alanyl-D-glutamyl-meso-2,6-diaminopimeloyl-D-alanyl-D-alanine + UDP-N-acetyl-alpha-D-glucosamine = di-trans,octa-cis-undecaprenyl diphospho-[N-acetyl-alpha-D-glucosaminyl-(1-&gt;4)]-N-acetyl-alpha-D-muramoyl-L-alanyl-D-glutamyl-meso-2,6-diaminopimeloyl-D-alanyl-D-alanine + UDP + H(+). It functions in the pathway cell wall biogenesis; peptidoglycan biosynthesis. Its function is as follows. Cell wall formation. Catalyzes the transfer of a GlcNAc subunit on undecaprenyl-pyrophosphoryl-MurNAc-pentapeptide (lipid intermediate I) to form undecaprenyl-pyrophosphoryl-MurNAc-(pentapeptide)GlcNAc (lipid intermediate II). The chain is UDP-N-acetylglucosamine--N-acetylmuramyl-(pentapeptide) pyrophosphoryl-undecaprenol N-acetylglucosamine transferase from Shouchella clausii (strain KSM-K16) (Alkalihalobacillus clausii).